Reading from the N-terminus, the 868-residue chain is Alanine--tRNA ligase (868 aa).

His-555, His-559, Cys-657, and His-661 together coordinate Zn(2+). The interval 828-847 (SQVGGKGGGRPDMAQAGGSE) is disordered.

This sequence belongs to the class-II aminoacyl-tRNA synthetase family. The cofactor is Zn(2+).

It localises to the cytoplasm. The enzyme catalyses tRNA(Ala) + L-alanine + ATP = L-alanyl-tRNA(Ala) + AMP + diphosphate. In terms of biological role, catalyzes the attachment of alanine to tRNA(Ala) in a two-step reaction: alanine is first activated by ATP to form Ala-AMP and then transferred to the acceptor end of tRNA(Ala). Also edits incorrectly charged Ser-tRNA(Ala) and Gly-tRNA(Ala) via its editing domain. The sequence is that of Alanine--tRNA ligase from Pseudoalteromonas translucida (strain TAC 125).